Reading from the N-terminus, the 89-residue chain is Bacterial microcompartment shell vertex protein GrpN (89 aa).

The BMV domain maps to 1–83 (MYLGKVIGTV…IDAAVVGIVD (83 aa)).

Belongs to the CcmL/EutN family. Homopentamer with a small central pore.

It localises to the bacterial microcompartment. Probably forms vertices in the bacterial microcompartment (BMC) predicted to be involved in glycyl radical-based 1,2-propanediol metabolism in this organism. The chain is Bacterial microcompartment shell vertex protein GrpN from Rhodospirillum rubrum (strain F11).